The following is a 144-amino-acid chain: D-aminoacyl-tRNA deacylase (144 aa).

The Gly-cisPro motif, important for rejection of L-amino acids signature appears at 136 to 137; that stretch reads GP.

Belongs to the DTD family. Homodimer.

It localises to the cytoplasm. It catalyses the reaction glycyl-tRNA(Ala) + H2O = tRNA(Ala) + glycine + H(+). The enzyme catalyses a D-aminoacyl-tRNA + H2O = a tRNA + a D-alpha-amino acid + H(+). Functionally, an aminoacyl-tRNA editing enzyme that deacylates mischarged D-aminoacyl-tRNAs. Also deacylates mischarged glycyl-tRNA(Ala), protecting cells against glycine mischarging by AlaRS. Acts via tRNA-based rather than protein-based catalysis; rejects L-amino acids rather than detecting D-amino acids in the active site. By recycling D-aminoacyl-tRNA to D-amino acids and free tRNA molecules, this enzyme counteracts the toxicity associated with the formation of D-aminoacyl-tRNA entities in vivo and helps enforce protein L-homochirality. The chain is D-aminoacyl-tRNA deacylase from Mannheimia succiniciproducens (strain KCTC 0769BP / MBEL55E).